Here is a 400-residue protein sequence, read N- to C-terminus: Ribose-phosphate pyrophosphokinase 2, chloroplastic (400 aa).

Residues 1–44 (MASLALTSPPSVKIPSYLSSSSSSLFSRSSISFRTTESRSRICV) constitute a chloroplast transit peptide. D214, H216, D225, and D229 together coordinate Mg(2+). Positions 300–315 (GKVAVMVDDIIDTAGT) are binding of phosphoribosylpyrophosphate.

Belongs to the ribose-phosphate pyrophosphokinase family.

It localises to the plastid. The protein resides in the chloroplast. It carries out the reaction D-ribose 5-phosphate + ATP = 5-phospho-alpha-D-ribose 1-diphosphate + AMP + H(+). The protein is Ribose-phosphate pyrophosphokinase 2, chloroplastic (PRS2) of Arabidopsis thaliana (Mouse-ear cress).